Reading from the N-terminus, the 311-residue chain is Mas-related G-protein coupled receptor member E (311 aa).

Residues 1 to 25 (MEPREAGQHAGAADGAQEDVAFNLV) lie on the Extracellular side of the membrane. A helical transmembrane segment spans residues 26–46 (ILSLTEGLGLGGLLGNGAVLW). Residues 47–63 (LLSSNVYRNPFAIYLLD) are Cytoplasmic-facing. A helical membrane pass occupies residues 64–84 (VACADLIFLGCHMVAIIPDLL). Residues 85 to 95 (QGRLDFPGFVQ) lie on the Extracellular side of the membrane. Residues 96-116 (TSLATLRFFCYIVGLSLLVAV) traverse the membrane as a helical segment. Residues 117 to 136 (SVEQCLAALFPAWYSCRRPR) are Cytoplasmic-facing. The helical transmembrane segment at 137-157 (HLTTCVCALTWACCLLLHLLL) threads the bilayer. Topologically, residues 158–177 (SGACTQFFGEPSRHLCRTLW) are extracellular. The helical transmembrane segment at 178–198 (LVAAVLLAVLCCTMCGASLML) threads the bilayer. Topologically, residues 199-216 (LLQVERGPQRPPPRGFPT) are cytoplasmic. The chain crosses the membrane as a helical span at residues 217–237 (LILLAVLLFLFCGLPFGIYWL). Topologically, residues 238–251 (SRNLLWHIPHYFYH) are extracellular. Residues 252-272 (FSFLTAAVYCAAKPVVYFCLG) form a helical membrane-spanning segment. Over 273 to 311 (SAQGRRLPLRLVLQRALGDEAELGAVRETSRRGLVDIAA) the chain is Cytoplasmic.

The protein belongs to the G-protein coupled receptor 1 family. Mas subfamily.

The protein resides in the cell membrane. Its function is as follows. Orphan receptor. May regulate nociceptor function and/or development, including the sensation or modulation of pain. The protein is Mas-related G-protein coupled receptor member E (MRGPRE) of Macaca fascicularis (Crab-eating macaque).